A 452-amino-acid chain; its full sequence is 23S rRNA (uracil(1939)-C(5))-methyltransferase RlmD (452 aa).

Residues 1-57 (METEVNVAEISALDYEGRGVTKVGGKTVFIKGALPSERVGFRIVRQKKQFDEAEAVA) form the TRAM domain. The [4Fe-4S] cluster site is built by Cys-70, Cys-76, Cys-79, and Cys-157. S-adenosyl-L-methionine-binding residues include Gln-269, Phe-298, Asn-303, Glu-319, Asn-347, and Asp-368. The active-site Nucleophile is the Cys-395.

This sequence belongs to the class I-like SAM-binding methyltransferase superfamily. RNA M5U methyltransferase family. RlmD subfamily.

It catalyses the reaction uridine(1939) in 23S rRNA + S-adenosyl-L-methionine = 5-methyluridine(1939) in 23S rRNA + S-adenosyl-L-homocysteine + H(+). Catalyzes the formation of 5-methyl-uridine at position 1939 (m5U1939) in 23S rRNA. The protein is 23S rRNA (uracil(1939)-C(5))-methyltransferase RlmD of Neisseria lactamica (strain 020-06).